Reading from the N-terminus, the 124-residue chain is Putative membrane protein insertion efficiency factor (124 aa).

Over residues 1-12 the composition is skewed to basic and acidic residues; the sequence is MCPQPHADHAIT. A disordered region spans residues 1–26; sequence MCPQPHADHAITRGDTGAAGGRNWSG.

It belongs to the UPF0161 family.

It is found in the cell inner membrane. Could be involved in insertion of integral membrane proteins into the membrane. In Rhizobium meliloti (strain 1021) (Ensifer meliloti), this protein is Putative membrane protein insertion efficiency factor.